Consider the following 556-residue polypeptide: Acetyl-coenzyme A thioesterase (556 aa).

The HotDog ACOT-type 1 domain occupies 6-118 (APGEVLMSQA…FSTFVVKPLG (113 aa)). N6-succinyllysine is present on Lys34. CoA is bound by residues 54–56 (TAS) and 83–85 (STS). Lys97 carries the post-translational modification N6-succinyllysine. Arg145 is a binding site for CoA. Residues Lys160 and Lys229 each carry the N6-succinyllysine modification. In terms of domain architecture, HotDog ACOT-type 2 spans 180-295 (MATSVQSIEL…FLIYNAVDDQ (116 aa)). 235–237 (KFR) serves as a coordination point for CoA. The START domain maps to 341-550 (GTQWDISKKG…IKFIENATHD (210 aa)).

Homodimer or homotetramer.

It localises to the cytoplasm. The protein localises to the cytosol. The enzyme catalyses acetyl-CoA + H2O = acetate + CoA + H(+). It carries out the reaction butanoyl-CoA + H2O = butanoate + CoA + H(+). The catalysed reaction is hexanoyl-CoA + H2O = hexanoate + CoA + H(+). The protein operates within lipid metabolism; fatty acid metabolism. With respect to regulation, allosterically regulated by ATP (activator) and ADP (inhibitor). Cold labile, it dissociates into inactive monomers at low temperature. Functionally, catalyzes the hydrolysis of acyl-CoAs into free fatty acids and coenzyme A (CoASH), regulating their respective intracellular levels. Preferentially hydrolyzes acetyl-CoA. The chain is Acetyl-coenzyme A thioesterase (Acot12) from Rattus norvegicus (Rat).